A 150-amino-acid polypeptide reads, in one-letter code: Large ribosomal subunit protein uL11 (150 aa).

It belongs to the universal ribosomal protein uL11 family. Part of the ribosomal stalk of the 50S ribosomal subunit. Interacts with L10 and the large rRNA to form the base of the stalk. L10 forms an elongated spine to which L12 dimers bind in a sequential fashion forming a multimeric L10(L12)X complex. Post-translationally, one or more lysine residues are methylated.

In terms of biological role, forms part of the ribosomal stalk which helps the ribosome interact with GTP-bound translation factors. This chain is Large ribosomal subunit protein uL11, found in Azobacteroides pseudotrichonymphae genomovar. CFP2.